Here is a 264-residue protein sequence, read N- to C-terminus: Hemin import ATP-binding protein HmuV (264 aa).

The ABC transporter domain maps to 2–241 (IEVSGVSVRL…ETMLSVFGLR (240 aa)). Residue 34–41 (GPNGSGKT) coordinates ATP.

This sequence belongs to the ABC transporter superfamily. Heme (hemin) importer (TC 3.A.1.14.5) family. As to quaternary structure, the complex is composed of two ATP-binding proteins (HmuV), two transmembrane proteins (HmuU) and a solute-binding protein (HmuT).

The protein localises to the cell inner membrane. Functionally, part of the ABC transporter complex HmuTUV involved in hemin import. Responsible for energy coupling to the transport system. The sequence is that of Hemin import ATP-binding protein HmuV from Rhizobium leguminosarum.